The sequence spans 436 residues: Serine protease hepsin (436 aa).

The disordered stretch occupies residues Met-1–Ala-29. Topologically, residues Met-1–Ala-38 are cytoplasmic. A helical; Signal-anchor for type II membrane protein membrane pass occupies residues Ala-39–Val-59. The Extracellular segment spans residues Thr-60 to Pro-436. The region spanning Val-73–Gln-170 is the SRCR domain. 8 disulfides stabilise this stretch: Cys-96/Cys-159, Cys-109/Cys-169, Cys-138/Cys-157, Cys-172/Cys-296, Cys-207/Cys-223, Cys-310/Cys-378, Cys-341/Cys-357, and Cys-368/Cys-400. An N-linked (GlcNAc...) asparagine glycan is attached at Asn-131. The region spanning Ile-182–Lys-424 is the Peptidase S1 domain. Residues His-222 and Asp-276 each act as charge relay system in the active site. Residue Ser-372 is the Charge relay system of the active site.

Belongs to the peptidase S1 family. Detected in kidney, in thick ascending tubule epithelial cells (at protein level). Detected in kidney and liver.

It is found in the apical cell membrane. The protein resides in the cell membrane. The protein localises to the secreted. It catalyses the reaction Cleavage after basic amino-acid residues, with Arg strongly preferred to Lys.. In terms of biological role, serine protease that cleaves extracellular substrates, and contributes to the proteolytic processing of growth factors, such as HGF and MST1/HGFL. Plays a role in cell growth and maintenance of cell morphology. Plays a role in the proteolytic processing of ACE2. Mediates the proteolytic cleavage of urinary UMOD that is required for UMOD polymerization. The sequence is that of Serine protease hepsin (Hpn) from Mus musculus (Mouse).